Consider the following 219-residue polypeptide: Casparian strip membrane protein 3 (219 aa).

Residues 1–43 are disordered; it reads MDPGREDEVPLAATSPESRRTRSNGRGKATVGDAPPPAETVVS. Residues 1-57 are Cytoplasmic-facing; it reads MDPGREDEVPLAATSPESRRTRSNGRGKATVGDAPPPAETVVSTKAAPLPTGGWKKG. Residues 58-78 form a helical membrane-spanning segment; it reads IAILDFILRLGAIGAAMGASI. At 79–108 the chain is on the extracellular side; that stretch reads LMGTNEQILPFFTQFLQFHAQWDDFPVFKL. Residues 109 to 129 traverse the membrane as a helical segment; sequence FVVLNALAGGFLILSLPLSIV. Topologically, residues 130 to 147 are cytoplasmic; it reads CIVRPLAVGPRFLLLITD. A helical transmembrane segment spans residues 148 to 168; sequence LVNMATVIAAASAAAAIVYVA. The Extracellular portion of the chain corresponds to 169–193; the sequence is HNGSQDANWIAICQQFTDFCQGTSE. An N-linked (GlcNAc...) asparagine glycan is attached at asparagine 170. Residues 194–214 form a helical membrane-spanning segment; it reads AVVVSFVAAVFLVCLIVVSTL. At 215 to 219 the chain is on the cytoplasmic side; that stretch reads ALKRT.

This sequence belongs to the Casparian strip membrane proteins (CASP) family. Homodimer and heterodimers.

The protein resides in the cell membrane. Regulates membrane-cell wall junctions and localized cell wall deposition. Required for establishment of the Casparian strip membrane domain (CSD) and the subsequent formation of Casparian strips, a cell wall modification of the root endodermis that determines an apoplastic barrier between the intraorganismal apoplasm and the extraorganismal apoplasm and prevents lateral diffusion. In Lotus japonicus (Lotus corniculatus var. japonicus), this protein is Casparian strip membrane protein 3.